The following is a 65-amino-acid chain: Large ribosomal subunit protein bL35 (65 aa).

The disordered stretch occupies residues 1–22; the sequence is MPKIKTVRGAAKRFKKTGKGGF. The segment covering 10–22 has biased composition (basic residues); it reads AAKRFKKTGKGGF.

This sequence belongs to the bacterial ribosomal protein bL35 family.

The chain is Large ribosomal subunit protein bL35 from Escherichia coli O127:H6 (strain E2348/69 / EPEC).